Consider the following 135-residue polypeptide: M-zodatoxin-Lt8q (135 aa).

A signal peptide spans 1 to 20 (MKYFVVALALVAAFACIAES). A propeptide spanning residues 21 to 60 (KPAESEHELAEVEEENELADLEDAVWLEHLADLSDLEEAR) is cleaved from the precursor.

The protein belongs to the cationic peptide 06 (cytoinsectotoxin) family. Expressed by the venom gland.

It localises to the secreted. In terms of biological role, insecticidal, cytolytic and antimicrobial peptide. Forms voltage-dependent, ion-permeable channels in membranes. At high concentration causes cell membrane lysis. This chain is M-zodatoxin-Lt8q (cit 1-16), found in Lachesana tarabaevi (Spider).